Reading from the N-terminus, the 314-residue chain is GDP-L-fucose synthase (314 aa).

NADP(+) is bound by residues 15–21 (GHKGMVG) and 109–112 (LGSS). The active-site Proton donor/acceptor is the Y140. NADP(+) is bound by residues K144, 167–170 (PTNL), and H183. K191, W206, R213, and D273 together coordinate substrate.

The protein belongs to the NAD(P)-dependent epimerase/dehydratase family. Fucose synthase subfamily.

The enzyme catalyses GDP-beta-L-fucose + NADP(+) = GDP-4-dehydro-alpha-D-rhamnose + NADPH + H(+). It participates in nucleotide-sugar biosynthesis; GDP-L-fucose biosynthesis via de novo pathway; GDP-L-fucose from GDP-alpha-D-mannose: step 2/2. Its function is as follows. Catalyzes the two-step NADP-dependent conversion of GDP-4-dehydro-6-deoxy-D-mannose to GDP-fucose, involving an epimerase and a reductase reaction. The protein is GDP-L-fucose synthase of Sinorhizobium fredii (strain NBRC 101917 / NGR234).